We begin with the raw amino-acid sequence, 99 residues long: Bublin coiled-coil protein (99 aa).

The stretch at 34–71 (LDQINSCLDDIEERNDALNGKLQELLESNRAARRDFRQ) forms a coiled coil. Over residues 66–78 (RRDFRQQITDHAD) the composition is skewed to basic and acidic residues. A disordered region spans residues 66 to 99 (RRDFRQQITDHADLPPPANDDDEDEQSRDAQKKD).

The protein belongs to the UPF0184 (EST00098) family.

The protein localises to the cell junction. The protein resides in the cytoplasm. Its subcellular location is the cytoskeleton. Functionally, essential for intermediate filament organization in intestinal cells, interacts with intermediate filament and regulates intestinal lumen morphology. The protein is Bublin coiled-coil protein (bbln) of Danio rerio (Zebrafish).